The primary structure comprises 498 residues: ATP synthase subunit beta, chloroplastic (498 aa).

172–179 (GGAGVGKT) lines the ATP pocket.

The protein belongs to the ATPase alpha/beta chains family. As to quaternary structure, F-type ATPases have 2 components, CF(1) - the catalytic core - and CF(0) - the membrane proton channel. CF(1) has five subunits: alpha(3), beta(3), gamma(1), delta(1), epsilon(1). CF(0) has four main subunits: a(1), b(1), b'(1) and c(9-12).

It is found in the plastid. The protein localises to the chloroplast thylakoid membrane. It carries out the reaction ATP + H2O + 4 H(+)(in) = ADP + phosphate + 5 H(+)(out). Its function is as follows. Produces ATP from ADP in the presence of a proton gradient across the membrane. The catalytic sites are hosted primarily by the beta subunits. This chain is ATP synthase subunit beta, chloroplastic, found in Magnolia tripetala (Umbrella-tree).